A 450-amino-acid chain; its full sequence is Tubulin alpha chain (450 aa).

Glutamine 11 is a binding site for GTP. The residue at position 40 (lysine 40) is an N6-acetyllysine. Residues glutamate 71, serine 140, glycine 144, threonine 145, threonine 179, asparagine 206, and asparagine 228 each contribute to the GTP site. Glutamate 71 contributes to the Mg(2+) binding site. Residue glutamate 254 is part of the active site.

It belongs to the tubulin family. Dimer of alpha and beta chains. A typical microtubule is a hollow water-filled tube with an outer diameter of 25 nm and an inner diameter of 15 nM. Alpha-beta heterodimers associate head-to-tail to form protofilaments running lengthwise along the microtubule wall with the beta-tubulin subunit facing the microtubule plus end conferring a structural polarity. Microtubules usually have 13 protofilaments but different protofilament numbers can be found in some organisms and specialized cells. The cofactor is Mg(2+). Undergoes a tyrosination/detyrosination cycle, the cyclic removal and re-addition of a C-terminal tyrosine residue by the enzymes tubulin tyrosine carboxypeptidase (TTCP) and tubulin tyrosine ligase (TTL), respectively. Post-translationally, acetylation of alpha chains at Lys-40 stabilizes microtubules and affects affinity and processivity of microtubule motors. This modification has a role in multiple cellular functions, ranging from cell motility, cell cycle progression or cell differentiation to intracellular trafficking and signaling.

Its subcellular location is the cytoplasm. The protein localises to the cytoskeleton. The catalysed reaction is GTP + H2O = GDP + phosphate + H(+). Functionally, tubulin is the major constituent of microtubules, a cylinder consisting of laterally associated linear protofilaments composed of alpha- and beta-tubulin heterodimers. Microtubules grow by the addition of GTP-tubulin dimers to the microtubule end, where a stabilizing cap forms. Below the cap, tubulin dimers are in GDP-bound state, owing to GTPase activity of alpha-tubulin. The chain is Tubulin alpha chain from Lepidoglyphus destructor (Storage mite).